Consider the following 448-residue polypeptide: tRNA-2-methylthio-N(6)-dimethylallyladenosine synthase (448 aa).

The MTTase N-terminal domain maps to 3-119; it reads GRVYVKTHGC…LPEMIDRARD (117 aa). Residues C12, C49, C82, C156, C160, and C163 each coordinate [4Fe-4S] cluster. Positions 142–374 constitute a Radical SAM core domain; that stretch reads RAEGPTAFVS…QETINANARR (233 aa). The 64-residue stretch at 377–440 folds into the TRAM domain; that stretch reads ESMVGTVQRV…PNSLRGELLG (64 aa).

This sequence belongs to the methylthiotransferase family. MiaB subfamily. Monomer. It depends on [4Fe-4S] cluster as a cofactor.

It is found in the cytoplasm. It catalyses the reaction N(6)-dimethylallyladenosine(37) in tRNA + (sulfur carrier)-SH + AH2 + 2 S-adenosyl-L-methionine = 2-methylsulfanyl-N(6)-dimethylallyladenosine(37) in tRNA + (sulfur carrier)-H + 5'-deoxyadenosine + L-methionine + A + S-adenosyl-L-homocysteine + 2 H(+). Functionally, catalyzes the methylthiolation of N6-(dimethylallyl)adenosine (i(6)A), leading to the formation of 2-methylthio-N6-(dimethylallyl)adenosine (ms(2)i(6)A) at position 37 in tRNAs that read codons beginning with uridine. This is tRNA-2-methylthio-N(6)-dimethylallyladenosine synthase from Alkalilimnicola ehrlichii (strain ATCC BAA-1101 / DSM 17681 / MLHE-1).